Consider the following 268-residue polypeptide: Short chain dehydrogenase/reductase dpchG (268 aa).

Val18, Asp70, Asn97, Lys131, Tyr165, and Lys169 together coordinate NADP(+). The active-site Proton acceptor is the Tyr165. The active-site Lowers pKa of active site Tyr is the Lys169.

It belongs to the short-chain dehydrogenases/reductases (SDR) family.

Its pathway is secondary metabolite biosynthesis; terpenoid biosynthesis. Its function is as follows. Short chain dehydrogenase/reductase; part of the gene cluster that mediates the biosynthesis of the diterpenoid pyrones higginsianins A and B. The first step of the pathway is the synthesis of the alpha-pyrone moiety by the polyketide synthase dpchA via condensation of one acetyl-CoA starter unit with 3 malonyl-CoA units and 2 methylations. The alpha-pyrone is then combined with geranylgeranyl pyrophosphate (GGPP) formed by the GGPP synthase dpchD through the action of the prenyltransferase dpchC to yield a linear alpha-pyrone diterpenoid. Subsequent steps in the diterpenoid pyrone biosynthetic pathway involve the decalin core formation, which is initiated by the epoxidation of the C10-C11 olefin by the FAD-dependent oxidoreductase dpchE, and is followed by a cyclization cascade catalyzed by the terpene cyclase dpchB. The short chain dehydrogenase/reductase dpchG then oxidizes the 8S hydroxy group to a ketone and the short chain dehydrogenase/reductase dpchH reduces the ketone to the 8R hydroxy group to yield higginsianin B. Finally, the FAD-dependent oxidoreductase dpchF converts higginsianin B into higginsianin A. The polypeptide is Short chain dehydrogenase/reductase dpchG (Colletotrichum higginsianum (strain IMI 349063) (Crucifer anthracnose fungus)).